Reading from the N-terminus, the 406-residue chain is Endoglucanase 1 (406 aa).

The signal sequence occupies residues 1–43 (MNSKKIGAMIAAAVLSLIVMTPAATRKIVQRQTRNSSTAVENS). Polar residues-rich tracts occupy residues 30–41 (QRQTRNSSTAVE) and 51–62 (ENVPVSQTHTND). Residues 30–62 (QRQTRNSSTAVENSAADESETENVPVSQTHTND) form a disordered region. The Proton donor role is filled by Glu210. Residue Glu330 is the Nucleophile of the active site.

The protein belongs to the glycosyl hydrolase 5 (cellulase A) family.

It catalyses the reaction Endohydrolysis of (1-&gt;4)-beta-D-glucosidic linkages in cellulose, lichenin and cereal beta-D-glucans.. The polypeptide is Endoglucanase 1 (Eg I) (Ruminococcus albus).